Reading from the N-terminus, the 250-residue chain is Tripartite motif-containing protein 74 (250 aa).

The RING-type zinc-finger motif lies at 16 to 57 (CPICLEVFKESLMLQCGHSYCKGCLVSLSYHLDTKVRCPMCW). The B box-type zinc-finger motif lies at 84–125 (PEPKVCVHHRNPLSLFCEKDQELICGLCGLLGSHQHHPVTPV). Zn(2+) contacts are provided by C89, H92, C111, and H117. Coiled coils occupy residues 125–169 (VSTV…NESD) and 204–235 (LVASLDMQLEQAQGTRERLAQAECVLEQFGNE).

Belongs to the TRIM/RBCC family.

The polypeptide is Tripartite motif-containing protein 74 (TRIM74) (Homo sapiens (Human)).